We begin with the raw amino-acid sequence, 235 residues long: Serine protease SplA (235 aa).

Residues 1 to 35 (MNKNVMVKGLTALTILTSLGFAENISNQPHSIAKA) form the signal peptide. Active-site charge relay system residues include His74, Asp113, and Ser189.

Belongs to the peptidase S1B family.

The protein resides in the secreted. In Staphylococcus aureus (strain USA300), this protein is Serine protease SplA (splA).